The chain runs to 464 residues: MIKPRTPPGTLELLPREQIAFQRMLDVIRRNYERFGFLPVETPVFELSDVLLTKSGGETERQVYFVQSTGALANAAESGDRSLPEMALRFDLTVPLARYVAEHEHELTFPFRRYQMQRVYRGERAQRGRFREFYQCDIDVIGKDSLSVRYDAEVLAVIHAVFSELRIGDFSIQLNNRKLMRGFFESLGVAEGERQLAVLREVDKLDKRGADYVRETLVGEGFEIPAEQVEKILAFVAVRSQGHADALAQLATLEADAGSSEILRTGVAELREVLQLVQALGVPETAYCLNFSIARGLDYYTGTVYETTLTDHPQIGSICSGGRYEDLASHYSKSKLPGVGISIGLSRLFWQLREAGLIDGIEGSSVQALVALMDEQGMPQSLDIARRLRAGGINTEVQMEPKKIGKQFQYAAKAGIRFVVLAGEDELARGVVAVKDLLREQQFEVSRDGLASTLQVELEQSKVM.

Belongs to the class-II aminoacyl-tRNA synthetase family. As to quaternary structure, homodimer.

It localises to the cytoplasm. The enzyme catalyses tRNA(His) + L-histidine + ATP = L-histidyl-tRNA(His) + AMP + diphosphate + H(+). The sequence is that of Histidine--tRNA ligase from Stenotrophomonas maltophilia (strain K279a).